The primary structure comprises 55 residues: Large ribosomal subunit protein bL33 (55 aa).

The span at 1-11 (MAKGSREKIKL) shows a compositional bias: basic and acidic residues. Residues 1–32 (MAKGSREKIKLESSASTGHFYTTSKNKRTKPE) are disordered. Polar residues predominate over residues 13–24 (SSASTGHFYTTS).

This sequence belongs to the bacterial ribosomal protein bL33 family.

In Polynucleobacter necessarius subsp. necessarius (strain STIR1), this protein is Large ribosomal subunit protein bL33.